We begin with the raw amino-acid sequence, 337 residues long: DNA-directed RNA polymerase subunit alpha (337 aa).

Residues Met1 to Ala232 form an alpha N-terminal domain (alpha-NTD) region. Positions Glu266–Phe337 are alpha C-terminal domain (alpha-CTD).

Belongs to the RNA polymerase alpha chain family. As to quaternary structure, in plastids the minimal PEP RNA polymerase catalytic core is composed of four subunits: alpha, beta, beta', and beta''. When a (nuclear-encoded) sigma factor is associated with the core the holoenzyme is formed, which can initiate transcription.

The protein localises to the plastid. It is found in the chloroplast. It carries out the reaction RNA(n) + a ribonucleoside 5'-triphosphate = RNA(n+1) + diphosphate. DNA-dependent RNA polymerase catalyzes the transcription of DNA into RNA using the four ribonucleoside triphosphates as substrates. This Buxus microphylla (Littleleaf boxwood) protein is DNA-directed RNA polymerase subunit alpha.